Reading from the N-terminus, the 657-residue chain is Archaeal Lon protease (657 aa).

Residues 1 to 123 (MEENIESVEE…KAEREKRDRS (123 aa)) are Cytoplasmic-facing. An ATP-binding site is contributed by 57 to 64 (GEPGTGKS). Residues 124–144 (RSIMFVIFSVVLLGIIAAIVL) traverse the membrane as a helical segment. Position 145 (Arg-145) is a topological domain, extracellular. The helical transmembrane segment at 146–166 (SITLIFFAIMAAAFLYMAMAF) threads the bilayer. Topologically, residues 167 to 657 (NPVIRNERAM…ATTRAGNNAA (491 aa)) are cytoplasmic. A Lon proteolytic domain is found at 433–618 (GSVVGMVNGL…EDVLRVALVN (186 aa)). Residues Ser-525 and Lys-568 contribute to the active site.

It belongs to the peptidase S16 family. Archaeal LonB subfamily. As to quaternary structure, homohexamer. Organized in a ring with a central cavity.

Its subcellular location is the cell membrane. Its function is as follows. ATP-dependent serine protease that mediates the selective degradation of mutant and abnormal proteins as well as certain short-lived regulatory proteins. Degrades polypeptides processively. This chain is Archaeal Lon protease, found in Thermoplasma acidophilum (strain ATCC 25905 / DSM 1728 / JCM 9062 / NBRC 15155 / AMRC-C165).